The sequence spans 166 residues: Methylmalonyl-CoA epimerase, mitochondrial (166 aa).

The transit peptide at Met1 to Gly23 directs the protein to the mitochondrion. Positions Lys37–Lys166 constitute a VOC domain. His40, His112, and Glu162 together coordinate Co(2+).

The protein belongs to the methylmalonyl-CoA epimerase family.

The protein localises to the mitochondrion. The catalysed reaction is (R)-methylmalonyl-CoA = (S)-methylmalonyl-CoA. Functionally, methylmalonyl-CoA epimerase involved in propionyl-CoA metabolism. In Dictyostelium discoideum (Social amoeba), this protein is Methylmalonyl-CoA epimerase, mitochondrial (mcee).